The chain runs to 293 residues: Protease HtpX (293 aa).

The next 2 helical transmembrane spans lie at 4-24 (ISLF…VLSL) and 33-53 (AGLM…SLLM). H139 lines the Zn(2+) pocket. Residue E140 is part of the active site. Position 143 (H143) interacts with Zn(2+). 2 helical membrane passes run 158-178 (VVNT…AGFM) and 193-213 (LVYF…ASII). A Zn(2+)-binding site is contributed by E222.

Belongs to the peptidase M48B family. Zn(2+) serves as cofactor.

It localises to the cell inner membrane. The chain is Protease HtpX from Sodalis glossinidius (strain morsitans).